Reading from the N-terminus, the 180-residue chain is Large ribosomal subunit protein uL6 (180 aa).

Belongs to the universal ribosomal protein uL6 family. As to quaternary structure, part of the 50S ribosomal subunit.

Its function is as follows. This protein binds to the 23S rRNA, and is important in its secondary structure. It is located near the subunit interface in the base of the L7/L12 stalk, and near the tRNA binding site of the peptidyltransferase center. The protein is Large ribosomal subunit protein uL6 of Anaeromyxobacter sp. (strain K).